The chain runs to 158 residues: MDFEKMKQWMEFAQQMYGGDFWKQVFDEDQKTPFMTNGQSPFPFAQQDQRGKGDASFPSMDIVDTVAEVQFLIYLPGYRKQDVHILSYGDYLVVKGQRFSYFNEQDFRQKEGKYGSFEKKIPLSDHLHGKMNAIFKDGILYITIQKDEGQAKTIVIDD.

Positions 51-158 constitute a sHSP domain; sequence GKGDASFPSM…GQAKTIVIDD (108 aa).

It belongs to the small heat shock protein (HSP20) family. Forms homodimers, homotetramers and higher oligomers.

It is found in the cytoplasm. Its function is as follows. Part of the cellular protein quality control system with a specific role in salt stress response. May facilitate protein homeostasis, together with chemical chaperones that accumulate during the salt stress response. Increased levels of YocM protects against both heat and salt stress. In vitro, displays an unusual aggregase chaperone activity. The chain is Salt stress-responsive protein YocM (yocM) from Bacillus subtilis (strain 168).